The following is a 535-amino-acid chain: Flavonoid 3'-monooxygenase CYP75B4 (535 aa).

The helical transmembrane segment at 8-28 threads the bilayer; it reads ISTSLLLTTVALSVIVCYALV. Residue Cys469 coordinates heme.

It belongs to the cytochrome P450 family. It depends on heme as a cofactor.

Its subcellular location is the membrane. It catalyses the reaction a 3'-unsubstituted flavone + reduced [NADPH--hemoprotein reductase] + O2 = a 3'-hydroxyflavone + oxidized [NADPH--hemoprotein reductase] + H2O + H(+). It participates in secondary metabolite biosynthesis; flavonoid biosynthesis. Catalyzes the 3'-hydroxylation of the flavonoid B-ring to the 3',4'-hydroxylated state. Catalyzes in vitro 3'-hydroxylation of different flavonoids. Catalyzes the conversion of apigenin to luteolin, naringenin to eriodictyol, and kaempferol to quercetin. Possesses specific 5'-hydroxylase activity toward chrysoeriol (a 3'-methoxylated flavone) and is indispensable for tricin formation. Converts chrysoeriol to selgin, a precursor of tricin, suggesting that chrysoeriol, instead of tricetin, is an intermediate in tricin biosynthesis. The sequence is that of Flavonoid 3'-monooxygenase CYP75B4 from Oryza sativa subsp. japonica (Rice).